The primary structure comprises 316 residues: 4-hydroxy-3-methylbut-2-enyl diphosphate reductase (316 aa).

Cys12 provides a ligand contact to [4Fe-4S] cluster. Residues His41 and His74 each contribute to the (2E)-4-hydroxy-3-methylbut-2-enyl diphosphate site. Dimethylallyl diphosphate contacts are provided by His41 and His74. Residues His41 and His74 each coordinate isopentenyl diphosphate. Cys96 is a binding site for [4Fe-4S] cluster. Position 124 (His124) interacts with (2E)-4-hydroxy-3-methylbut-2-enyl diphosphate. His124 is a dimethylallyl diphosphate binding site. His124 serves as a coordination point for isopentenyl diphosphate. The active-site Proton donor is the Glu126. A (2E)-4-hydroxy-3-methylbut-2-enyl diphosphate-binding site is contributed by Thr169. Residue Cys199 participates in [4Fe-4S] cluster binding. Residues Ser227, Ser228, Asn229, and Ser271 each coordinate (2E)-4-hydroxy-3-methylbut-2-enyl diphosphate. Positions 227, 228, 229, and 271 each coordinate dimethylallyl diphosphate. Residues Ser227, Ser228, Asn229, and Ser271 each coordinate isopentenyl diphosphate.

This sequence belongs to the IspH family. The cofactor is [4Fe-4S] cluster.

It catalyses the reaction isopentenyl diphosphate + 2 oxidized [2Fe-2S]-[ferredoxin] + H2O = (2E)-4-hydroxy-3-methylbut-2-enyl diphosphate + 2 reduced [2Fe-2S]-[ferredoxin] + 2 H(+). It carries out the reaction dimethylallyl diphosphate + 2 oxidized [2Fe-2S]-[ferredoxin] + H2O = (2E)-4-hydroxy-3-methylbut-2-enyl diphosphate + 2 reduced [2Fe-2S]-[ferredoxin] + 2 H(+). Its pathway is isoprenoid biosynthesis; dimethylallyl diphosphate biosynthesis; dimethylallyl diphosphate from (2E)-4-hydroxy-3-methylbutenyl diphosphate: step 1/1. It functions in the pathway isoprenoid biosynthesis; isopentenyl diphosphate biosynthesis via DXP pathway; isopentenyl diphosphate from 1-deoxy-D-xylulose 5-phosphate: step 6/6. Functionally, catalyzes the conversion of 1-hydroxy-2-methyl-2-(E)-butenyl 4-diphosphate (HMBPP) into a mixture of isopentenyl diphosphate (IPP) and dimethylallyl diphosphate (DMAPP). Acts in the terminal step of the DOXP/MEP pathway for isoprenoid precursor biosynthesis. The protein is 4-hydroxy-3-methylbut-2-enyl diphosphate reductase of Xylella fastidiosa (strain M12).